A 437-amino-acid polypeptide reads, in one-letter code: Adenylosuccinate lyase (437 aa).

N(6)-(1,2-dicarboxyethyl)-AMP is bound by residues 4–5, 70–72, and 96–97; these read RY, KHD, and TS. The active-site Proton donor/acceptor is H144. Position 215 (Q215) interacts with N(6)-(1,2-dicarboxyethyl)-AMP. The Proton donor/acceptor role is filled by S265. N(6)-(1,2-dicarboxyethyl)-AMP is bound by residues S266, 271–273, and 310–314; these read KKN and SVERV.

Belongs to the lyase 1 family. Adenylosuccinate lyase subfamily. Homooligomer. Residues from neighboring subunits contribute catalytic and substrate-binding residues to each active site.

The catalysed reaction is N(6)-(1,2-dicarboxyethyl)-AMP = fumarate + AMP. It catalyses the reaction (2S)-2-[5-amino-1-(5-phospho-beta-D-ribosyl)imidazole-4-carboxamido]succinate = 5-amino-1-(5-phospho-beta-D-ribosyl)imidazole-4-carboxamide + fumarate. The protein operates within purine metabolism; AMP biosynthesis via de novo pathway; AMP from IMP: step 2/2. It functions in the pathway purine metabolism; IMP biosynthesis via de novo pathway; 5-amino-1-(5-phospho-D-ribosyl)imidazole-4-carboxamide from 5-amino-1-(5-phospho-D-ribosyl)imidazole-4-carboxylate: step 2/2. In terms of biological role, catalyzes two reactions in de novo purine nucleotide biosynthesis. Catalyzes the breakdown of 5-aminoimidazole- (N-succinylocarboxamide) ribotide (SAICAR or 2-[5-amino-1-(5-phospho-beta-D-ribosyl)imidazole-4-carboxamido]succinate) to 5-aminoimidazole-4-carboxamide ribotide (AICAR or 5-amino-1-(5-phospho-beta-D-ribosyl)imidazole-4-carboxamide) and fumarate, and of adenylosuccinate (ADS or N(6)-(1,2-dicarboxyethyl)-AMP) to adenosine monophosphate (AMP) and fumarate. The sequence is that of Adenylosuccinate lyase (purB) from Aquifex aeolicus (strain VF5).